A 318-amino-acid polypeptide reads, in one-letter code: Aspartate carbamoyltransferase catalytic subunit (318 aa).

Residues arginine 59 and threonine 60 each contribute to the carbamoyl phosphate site. L-aspartate is bound at residue lysine 87. Carbamoyl phosphate contacts are provided by arginine 109, histidine 137, and glutamine 140. Residues arginine 170 and arginine 224 each coordinate L-aspartate. Carbamoyl phosphate contacts are provided by glycine 265 and proline 266.

This sequence belongs to the aspartate/ornithine carbamoyltransferase superfamily. ATCase family. In terms of assembly, heterododecamer (2C3:3R2) of six catalytic PyrB chains organized as two trimers (C3), and six regulatory PyrI chains organized as three dimers (R2).

The catalysed reaction is carbamoyl phosphate + L-aspartate = N-carbamoyl-L-aspartate + phosphate + H(+). Its pathway is pyrimidine metabolism; UMP biosynthesis via de novo pathway; (S)-dihydroorotate from bicarbonate: step 2/3. In terms of biological role, catalyzes the condensation of carbamoyl phosphate and aspartate to form carbamoyl aspartate and inorganic phosphate, the committed step in the de novo pyrimidine nucleotide biosynthesis pathway. This Rhizobium etli (strain CIAT 652) protein is Aspartate carbamoyltransferase catalytic subunit.